A 194-amino-acid polypeptide reads, in one-letter code: Oligoribonuclease (194 aa).

The Exonuclease domain occupies 11 to 174 (LIWIDLEMTG…SDVRDSINEL (164 aa)). Tyrosine 132 is an active-site residue.

The protein belongs to the oligoribonuclease family.

Its subcellular location is the cytoplasm. Functionally, 3'-to-5' exoribonuclease specific for small oligoribonucleotides. The chain is Oligoribonuclease from Xanthomonas oryzae pv. oryzae (strain MAFF 311018).